The following is a 420-amino-acid chain: D-tagatose-1,6-bisphosphate aldolase subunit GatZ (420 aa).

It belongs to the GatZ/KbaZ family. GatZ subfamily. In terms of assembly, forms a complex with GatY.

It functions in the pathway carbohydrate metabolism; D-tagatose 6-phosphate degradation; D-glyceraldehyde 3-phosphate and glycerone phosphate from D-tagatose 6-phosphate: step 2/2. Component of the tagatose-1,6-bisphosphate aldolase GatYZ that is required for full activity and stability of the Y subunit. Could have a chaperone-like function for the proper and stable folding of GatY. When expressed alone, GatZ does not show any aldolase activity. Is involved in the catabolism of galactitol. This Shigella boydii serotype 18 (strain CDC 3083-94 / BS512) protein is D-tagatose-1,6-bisphosphate aldolase subunit GatZ.